Reading from the N-terminus, the 1002-residue chain is SIT4-associating protein SAP155 (1002 aa).

5 disordered regions span residues 51–131 (GTSD…APMM), 214–273 (QQQL…ANED), 609–645 (EQLK…ESDY), 868–901 (DNTT…GGGQ), and 940–1002 (NTEN…YDHE). At S58 the chain carries Phosphoserine. A compositionally biased stretch (basic and acidic residues) spans 62-97 (EYSHGDEVKTARGDQKSRFEKDDQQERYEKEEEERS). Positions 98–114 (MNSSESSTTSFSSGSTS) are enriched in low complexity. Acidic residues predominate over residues 220–241 (SSQEDVYVESDTEQEEEKEDDN). S255 carries the post-translational modification Phosphoserine. The segment covering 262–273 (NNNDDDDDANED) has biased composition (acidic residues). The segment covering 609–626 (EQLKTKHSPTRDTDHDLK) has biased composition (basic and acidic residues). 2 positions are modified to phosphothreonine: T613 and T618. Positions 635–645 (DNNDNDDESDY) are enriched in acidic residues. The span at 868-885 (DNTTVLTPNGDASNNNEI) shows a compositional bias: polar residues. A compositionally biased stretch (low complexity) spans 956–976 (SNSNINNTNHNSNNSNNNDNN). Over residues 991–1002 (EDADNDNDYDHE) the composition is skewed to acidic residues.

It belongs to the SAPS family. As to quaternary structure, associates with the SIT4 protein phosphatase catalytic subunit in a cell-cycle-dependent manner. Post-translationally, hyperphosphorylated in the absence of SIT4.

It localises to the cytoplasm. Functionally, positive regulator of protein phosphatase SIT4. Involved in directing expression of TOR-repressed genes and in dephosphorylation of NPR1 in response to nutrient starvation. Negatively modulates K(+) efflux of the cell by the Na(+)-K(+)/H(+) antiporter NHA1. The polypeptide is SIT4-associating protein SAP155 (SAP155) (Saccharomyces cerevisiae (strain ATCC 204508 / S288c) (Baker's yeast)).